Here is a 146-residue protein sequence, read N- to C-terminus: ATP synthase epsilon chain (146 aa).

It belongs to the ATPase epsilon chain family. As to quaternary structure, F-type ATPases have 2 components, CF(1) - the catalytic core - and CF(0) - the membrane proton channel. CF(1) has five subunits: alpha(3), beta(3), gamma(1), delta(1), epsilon(1). CF(0) has three main subunits: a, b and c.

Its subcellular location is the cell inner membrane. In terms of biological role, produces ATP from ADP in the presence of a proton gradient across the membrane. The chain is ATP synthase epsilon chain from Rhodospirillum centenum (strain ATCC 51521 / SW).